Consider the following 1365-residue polypeptide: Serine/threonine-protein kinase LMTK1 (1365 aa).

The chain crosses the membrane as a helical span at residues 32-52 (LAVVAVSFSGIFTVVILMLAC). Residues 126 to 396 (LLYLKEIGHG…PTAEEVHLLL (271 aa)) enclose the Protein kinase domain. Residues 132-140 (IGHGWFGKV) and lysine 157 contribute to the ATP site. The active-site Proton acceptor is the aspartate 254. Serine 500 carries the phosphoserine modification. 5 disordered regions span residues 550 to 623 (PDCA…LPAE), 638 to 698 (DDPL…GYVS), 791 to 1186 (QEAE…PAVP), 1237 to 1293 (ESPT…EWDG), and 1343 to 1365 (ISDS…YTEA). Residues 560 to 575 (QAVTDQDNNSEESTVA) are compositionally biased toward polar residues. 2 stretches are compositionally biased toward low complexity: residues 638 to 655 (DDPL…QPSP) and 675 to 686 (SSNMSANNNSAS). Composition is skewed to polar residues over residues 848 to 860 (LESS…QEAP) and 869 to 879 (EATSGVFTDLS). Low complexity-rich tracts occupy residues 904-918 (PDSL…SASD) and 981-993 (PLLS…LSKK). A compositionally biased stretch (basic and acidic residues) spans 1015–1030 (PEKHSGIQDSQKEQDL). The residue at position 1035 (serine 1035) is a Phosphoserine. Residues 1037–1053 (GHQSVQAFPRSAVSSEV) show a composition bias toward polar residues. Residues 1072–1083 (PLGAQGPVGVQP) show a composition bias toward low complexity. Residues 1104 to 1132 (GSGTEPQGPSGQLSGRAQQGQMGNPSTPR) are compositionally biased toward polar residues. Residues 1150–1164 (PEEDEDTEDSEESDE) show a composition bias toward acidic residues. Threonine 1156 is modified (phosphothreonine). A phosphoserine mark is found at serine 1159, serine 1162, serine 1175, serine 1178, and serine 1253. Over residues 1354 to 1365 (PAAGAGGRYTEA) the composition is skewed to gly residues.

It belongs to the protein kinase superfamily. Tyr protein kinase family. Interacts with CDK5. Autophosphorylated. Phosphorylated by CDK5. As to expression, expressed in brain, and, to a lower extent, in kidney, heart, lung and skeletal muscle. In the brain, expressed in the olfactory bulb, cerebellum, striatum, hippocampal formation, thalamus, hypothalamus, and pontine nuclei (at protein level).

The protein localises to the membrane. Its subcellular location is the cytoplasm. It is found in the perinuclear region. It localises to the cell projection. The protein resides in the dendrite. The protein localises to the axon. Its subcellular location is the growth cone. It catalyses the reaction L-seryl-[protein] + ATP = O-phospho-L-seryl-[protein] + ADP + H(+). The catalysed reaction is L-threonyl-[protein] + ATP = O-phospho-L-threonyl-[protein] + ADP + H(+). Functionally, may be involved in neuronal differentiation. The polypeptide is Serine/threonine-protein kinase LMTK1 (Aatk) (Mus musculus (Mouse)).